The sequence spans 508 residues: GMP synthase [glutamine-hydrolyzing] (508 aa).

A Glutamine amidotransferase type-1 domain is found at 1–189; that stretch reads MILVLDFGSQ…ALLVCGCEKT (189 aa). Cys-78 functions as the Nucleophile in the catalytic mechanism. Residues His-163 and Glu-165 contribute to the active site. The region spanning 190 to 383 is the GMPS ATP-PPase domain; that stretch reads WGMQHFAQRE…LGVSQDFLMR (194 aa). 217–223 is an ATP binding site; that stretch reads SGGVDST.

Homodimer.

The enzyme catalyses XMP + L-glutamine + ATP + H2O = GMP + L-glutamate + AMP + diphosphate + 2 H(+). Its pathway is purine metabolism; GMP biosynthesis; GMP from XMP (L-Gln route): step 1/1. In terms of biological role, catalyzes the synthesis of GMP from XMP. The protein is GMP synthase [glutamine-hydrolyzing] (guaA) of Helicobacter pylori (strain ATCC 700392 / 26695) (Campylobacter pylori).